A 262-amino-acid polypeptide reads, in one-letter code: F-actin-capping protein subunit alpha (262 aa).

It belongs to the F-actin-capping protein alpha subunit family. As to quaternary structure, heterodimer of an alpha and a beta subunit.

Its subcellular location is the cytoplasm. The protein localises to the cytoskeleton. Functionally, F-actin-capping proteins bind in a Ca(2+)-independent manner to the fast growing ends of actin filaments (barbed end) thereby blocking the exchange of subunits at these ends. Unlike other capping proteins (such as gelsolin and severin), these proteins do not sever actin filaments. The polypeptide is F-actin-capping protein subunit alpha (CAP1) (Yarrowia lipolytica (strain CLIB 122 / E 150) (Yeast)).